The sequence spans 673 residues: Xaa-Pro aminopeptidase 2 (673 aa).

Positions 1–21 (MAQACWGCYPWLVLICACAWG) are cleaved as a signal peptide. 3 N-linked (GlcNAc...) asparagine glycosylation sites follow: Asn34, Asn48, and Asn64. Arg115 serves as a coordination point for substrate. N-linked (GlcNAc...) asparagine glycosylation is found at Asn277, Asn290, and Asn294. His429 is a substrate binding site. Asp449 contacts Mn(2+). Positions 449, 460, and 523 each coordinate Zn(2+). His523, His532, and Glu554 together coordinate substrate. The Zn(2+) site is built by Glu554 and Glu568. The GPI-anchor amidated alanine moiety is linked to residue Ala649. Residues 650 to 673 (RAAPTTSLGSLMTVSALAILGWSV) constitute a propeptide, removed in mature form.

The protein belongs to the peptidase M24B family. As to quaternary structure, homotrimer. Requires Zn(2+) as cofactor. Post-translationally, N-glycosylated. As to expression, kidney.

The protein localises to the cell membrane. The catalysed reaction is Release of any N-terminal amino acid, including proline, that is linked to proline, even from a dipeptide or tripeptide.. Inhibited by apstatin and the metal ion chelator EDTA. Potently inhibited by the converting enzyme inhibitors cilazaprilat; enalaprilat; L155,212; ramiprilat and YS 980. Also inhibited to a lesser extent by indolaprilat; quinaprilat; spiraprilat; captopril and zofenoprilat. In terms of biological role, membrane-bound metalloprotease which catalyzes the removal of a penultimate prolyl residue from the N-termini of peptides, such as Arg-Pro-Pro. May play a role in the metabolism of the vasodilator bradykinin. This is Xaa-Pro aminopeptidase 2 (XPNPEP2) from Sus scrofa (Pig).